The chain runs to 156 residues: dCTP deaminase (156 aa).

DCTP is bound by residues 79 to 84, Asp-95, Gln-124, and Tyr-138; that span reads RSSLAR.

Belongs to the dCTP deaminase family. In terms of assembly, homotrimer.

It carries out the reaction dCTP + H2O + H(+) = dUTP + NH4(+). Its pathway is pyrimidine metabolism; dUMP biosynthesis; dUMP from dCTP (dUTP route): step 1/2. Its function is as follows. Catalyzes the deamination of dCTP to dUTP. The polypeptide is dCTP deaminase (Pyrococcus furiosus (strain ATCC 43587 / DSM 3638 / JCM 8422 / Vc1)).